The chain runs to 361 residues: UDP-N-acetylglucosamine--N-acetylmuramyl-(pentapeptide) pyrophosphoryl-undecaprenol N-acetylglucosamine transferase (361 aa).

UDP-N-acetyl-alpha-D-glucosamine-binding positions include 13 to 15 (TGG), asparagine 125, arginine 167, serine 196, isoleucine 251, 270 to 275 (ALTVTE), and glutamine 296.

It belongs to the glycosyltransferase 28 family. MurG subfamily.

It is found in the cell inner membrane. It catalyses the reaction di-trans,octa-cis-undecaprenyl diphospho-N-acetyl-alpha-D-muramoyl-L-alanyl-D-glutamyl-meso-2,6-diaminopimeloyl-D-alanyl-D-alanine + UDP-N-acetyl-alpha-D-glucosamine = di-trans,octa-cis-undecaprenyl diphospho-[N-acetyl-alpha-D-glucosaminyl-(1-&gt;4)]-N-acetyl-alpha-D-muramoyl-L-alanyl-D-glutamyl-meso-2,6-diaminopimeloyl-D-alanyl-D-alanine + UDP + H(+). It participates in cell wall biogenesis; peptidoglycan biosynthesis. Functionally, cell wall formation. Catalyzes the transfer of a GlcNAc subunit on undecaprenyl-pyrophosphoryl-MurNAc-pentapeptide (lipid intermediate I) to form undecaprenyl-pyrophosphoryl-MurNAc-(pentapeptide)GlcNAc (lipid intermediate II). The chain is UDP-N-acetylglucosamine--N-acetylmuramyl-(pentapeptide) pyrophosphoryl-undecaprenol N-acetylglucosamine transferase from Psychrobacter cryohalolentis (strain ATCC BAA-1226 / DSM 17306 / VKM B-2378 / K5).